The sequence spans 213 residues: 3,4-dihydroxy-2-butanone 4-phosphate synthase (213 aa).

D-ribulose 5-phosphate-binding positions include 37 to 38 (RE), Asp-42, 150 to 154 (RPGHT), and Glu-174. Glu-38 contacts Mg(2+). Position 153 (His-153) interacts with Mg(2+).

This sequence belongs to the DHBP synthase family. As to quaternary structure, homodimer. Mg(2+) serves as cofactor. Mn(2+) is required as a cofactor.

It carries out the reaction D-ribulose 5-phosphate = (2S)-2-hydroxy-3-oxobutyl phosphate + formate + H(+). It participates in cofactor biosynthesis; riboflavin biosynthesis; 2-hydroxy-3-oxobutyl phosphate from D-ribulose 5-phosphate: step 1/1. Catalyzes the conversion of D-ribulose 5-phosphate to formate and 3,4-dihydroxy-2-butanone 4-phosphate. The polypeptide is 3,4-dihydroxy-2-butanone 4-phosphate synthase (Clostridium botulinum (strain Langeland / NCTC 10281 / Type F)).